The following is a 395-amino-acid chain: Crh-like protein 5 (395 aa).

An N-terminal signal peptide occupies residues 1–19 (MYFKYTAAALAAVLPLCSA). Cysteine 25 and cysteine 32 form a disulfide bridge. In terms of domain architecture, GH16 spans 45–230 (ADFTSASALD…WAGGLTDYSA (186 aa)). The active-site Nucleophile is glutamate 119. The active-site Proton donor is glutamate 123. Positions 123, 203, 207, and 218 each coordinate chitin. A disordered region spans residues 271-374 (ISSSSSVTSS…PELSQGAAGS (104 aa)). 2 stretches are compositionally biased toward low complexity: residues 272-338 (SSSS…SNTG) and 348-364 (GSSS…ASAT). The N-linked (GlcNAc...) asparagine glycan is linked to asparagine 319. Glycine 370 carries GPI-like-anchor amidated glycine lipidation. The propeptide at 371–395 (AAGSIKGSVTACALVFGAVAAVLAF) is removed in mature form.

The protein belongs to the glycosyl hydrolase 16 family. CRH1 subfamily. Post-translationally, the GPI-like anchor contains a phosphoceramide lipid group. The anchor position has not been determined.

It is found in the cell membrane. Its subcellular location is the secreted. The protein resides in the cell wall. The enzyme catalyses Random endo-hydrolysis of N-acetyl-beta-D-glucosaminide (1-&gt;4)-beta-linkages in chitin and chitodextrins.. Dual chitinase/transglycosylase that plays a role in cell wall architecture. Chitinase and transglycosylase activities are coupled. Required for the polysaccharide cross-linking at the septa and the cell wall. More specifically, transfers chitin to 1,6-beta-glucan in the cell wall. Chr5 shows acceptor substrate promiscuity and is also able to cross-link chitin to chitin. The chain is Crh-like protein 5 from Aspergillus fumigatus (strain ATCC MYA-4609 / CBS 101355 / FGSC A1100 / Af293) (Neosartorya fumigata).